The following is a 369-amino-acid chain: sn-glycerol-3-phosphate import ATP-binding protein UgpC (369 aa).

The ABC transporter domain maps to 4 to 235 (LSLRNVQKTY…PASTFVAGFI (232 aa)). 37 to 44 (GPSGCGKS) is an ATP binding site.

The protein belongs to the ABC transporter superfamily. sn-glycerol-3-phosphate importer (TC 3.A.1.1.3) family. As to quaternary structure, the complex is composed of two ATP-binding proteins (UgpC), two transmembrane proteins (UgpA and UgpE) and a solute-binding protein (UgpB).

The protein resides in the cell inner membrane. The catalysed reaction is sn-glycerol 3-phosphate(out) + ATP + H2O = sn-glycerol 3-phosphate(in) + ADP + phosphate + H(+). In terms of biological role, part of the ABC transporter complex UgpBAEC involved in sn-glycerol-3-phosphate (G3P) import. Responsible for energy coupling to the transport system. This Cupriavidus pinatubonensis (strain JMP 134 / LMG 1197) (Cupriavidus necator (strain JMP 134)) protein is sn-glycerol-3-phosphate import ATP-binding protein UgpC.